A 398-amino-acid polypeptide reads, in one-letter code: tRNA pseudouridine synthase D (398 aa).

Asp-76 functions as the Nucleophile in the catalytic mechanism. A TRUD domain is found at 151–360 (GVPNFFGEQR…MPGERRPLRI (210 aa)).

The protein belongs to the pseudouridine synthase TruD family.

The enzyme catalyses uridine(13) in tRNA = pseudouridine(13) in tRNA. Responsible for synthesis of pseudouridine from uracil-13 in transfer RNAs. This is tRNA pseudouridine synthase D from Syntrophotalea carbinolica (strain DSM 2380 / NBRC 103641 / GraBd1) (Pelobacter carbinolicus).